The following is a 118-amino-acid chain: Small ribosomal subunit protein uS13 (118 aa).

The segment at 94-118 (SLPLRGQRTKTNARTRKGPRKPIKK) is disordered.

Belongs to the universal ribosomal protein uS13 family. As to quaternary structure, part of the 30S ribosomal subunit. Forms a loose heterodimer with protein S19. Forms two bridges to the 50S subunit in the 70S ribosome.

In terms of biological role, located at the top of the head of the 30S subunit, it contacts several helices of the 16S rRNA. In the 70S ribosome it contacts the 23S rRNA (bridge B1a) and protein L5 of the 50S subunit (bridge B1b), connecting the 2 subunits; these bridges are implicated in subunit movement. Contacts the tRNAs in the A and P-sites. The chain is Small ribosomal subunit protein uS13 from Alteromonas mediterranea (strain DSM 17117 / CIP 110805 / LMG 28347 / Deep ecotype).